Reading from the N-terminus, the 297-residue chain is HTH-type transcriptional regulator IlvY (297 aa).

Residues 1-58 enclose the HTH lysR-type domain; sequence MDLRDLKTFLHLAESRHFGRSARAMHVSPSTLSRQIQRLEEDLGQPLFVRDNRTVTLT. A DNA-binding region (H-T-H motif) is located at residues 18-37; that stretch reads FGRSARAMHVSPSTLSRQIQ.

This sequence belongs to the LysR transcriptional regulatory family.

It localises to the cytoplasm. In terms of biological role, this protein activates the transcription of the ilvC gene in the presence of acetolactate or acetohydroxybutyrate. IlvY is also a negative regulator of its own expression. The protein is HTH-type transcriptional regulator IlvY (ilvY) of Escherichia coli (strain K12).